Here is a 175-residue protein sequence, read N- to C-terminus: Large ribosomal subunit protein uL10 (175 aa).

Belongs to the universal ribosomal protein uL10 family. As to quaternary structure, part of the ribosomal stalk of the 50S ribosomal subunit. The N-terminus interacts with L11 and the large rRNA to form the base of the stalk. The C-terminus forms an elongated spine to which L12 dimers bind in a sequential fashion forming a multimeric L10(L12)X complex.

Forms part of the ribosomal stalk, playing a central role in the interaction of the ribosome with GTP-bound translation factors. This chain is Large ribosomal subunit protein uL10, found in Methylococcus capsulatus (strain ATCC 33009 / NCIMB 11132 / Bath).